A 596-amino-acid polypeptide reads, in one-letter code: Proline--tRNA ligase (596 aa).

It belongs to the class-II aminoacyl-tRNA synthetase family. ProS type 1 subfamily. As to quaternary structure, homodimer.

The protein localises to the cytoplasm. It catalyses the reaction tRNA(Pro) + L-proline + ATP = L-prolyl-tRNA(Pro) + AMP + diphosphate. Functionally, catalyzes the attachment of proline to tRNA(Pro) in a two-step reaction: proline is first activated by ATP to form Pro-AMP and then transferred to the acceptor end of tRNA(Pro). As ProRS can inadvertently accommodate and process non-cognate amino acids such as alanine and cysteine, to avoid such errors it has two additional distinct editing activities against alanine. One activity is designated as 'pretransfer' editing and involves the tRNA(Pro)-independent hydrolysis of activated Ala-AMP. The other activity is designated 'posttransfer' editing and involves deacylation of mischarged Ala-tRNA(Pro). The misacylated Cys-tRNA(Pro) is not edited by ProRS. In Prochlorococcus marinus (strain NATL1A), this protein is Proline--tRNA ligase.